A 315-amino-acid polypeptide reads, in one-letter code: Porphobilinogen deaminase (315 aa).

At Cys-241 the chain carries S-(dipyrrolylmethanemethyl)cysteine.

Belongs to the HMBS family. Monomer. Requires dipyrromethane as cofactor.

It catalyses the reaction 4 porphobilinogen + H2O = hydroxymethylbilane + 4 NH4(+). It participates in porphyrin-containing compound metabolism; protoporphyrin-IX biosynthesis; coproporphyrinogen-III from 5-aminolevulinate: step 2/4. Functionally, tetrapolymerization of the monopyrrole PBG into the hydroxymethylbilane pre-uroporphyrinogen in several discrete steps. This chain is Porphobilinogen deaminase, found in Nitratidesulfovibrio vulgaris (strain ATCC 29579 / DSM 644 / CCUG 34227 / NCIMB 8303 / VKM B-1760 / Hildenborough) (Desulfovibrio vulgaris).